Consider the following 507-residue polypeptide: tRNA(Ile)-lysidine synthase (507 aa).

24–29 (SGGGDS) serves as a coordination point for ATP. The CMP/dCMP-type deaminase domain maps to 370 to 500 (PPEEAHMAEA…KLLRDFFARL (131 aa)). Zn(2+)-binding residues include His-420, Cys-445, and Cys-448.

This sequence belongs to the tRNA(Ile)-lysidine synthase family.

Its subcellular location is the cytoplasm. It carries out the reaction cytidine(34) in tRNA(Ile2) + L-lysine + ATP = lysidine(34) in tRNA(Ile2) + AMP + diphosphate + H(+). In terms of biological role, ligates lysine onto the cytidine present at position 34 of the AUA codon-specific tRNA(Ile) that contains the anticodon CAU, in an ATP-dependent manner. Cytidine is converted to lysidine, thus changing the amino acid specificity of the tRNA from methionine to isoleucine. In Thermus thermophilus (strain ATCC 27634 / DSM 579 / HB8), this protein is tRNA(Ile)-lysidine synthase (tilS).